Consider the following 104-residue polypeptide: Pyrimidine/purine nucleoside phosphorylase (104 aa).

This sequence belongs to the nucleoside phosphorylase PpnP family.

It carries out the reaction a purine D-ribonucleoside + phosphate = a purine nucleobase + alpha-D-ribose 1-phosphate. The catalysed reaction is adenosine + phosphate = alpha-D-ribose 1-phosphate + adenine. The enzyme catalyses cytidine + phosphate = cytosine + alpha-D-ribose 1-phosphate. It catalyses the reaction guanosine + phosphate = alpha-D-ribose 1-phosphate + guanine. It carries out the reaction inosine + phosphate = alpha-D-ribose 1-phosphate + hypoxanthine. The catalysed reaction is thymidine + phosphate = 2-deoxy-alpha-D-ribose 1-phosphate + thymine. The enzyme catalyses uridine + phosphate = alpha-D-ribose 1-phosphate + uracil. It catalyses the reaction xanthosine + phosphate = alpha-D-ribose 1-phosphate + xanthine. Catalyzes the phosphorolysis of diverse nucleosides, yielding D-ribose 1-phosphate and the respective free bases. Can use uridine, adenosine, guanosine, cytidine, thymidine, inosine and xanthosine as substrates. Also catalyzes the reverse reactions. The chain is Pyrimidine/purine nucleoside phosphorylase from Geotalea uraniireducens (strain Rf4) (Geobacter uraniireducens).